The following is a 72-amino-acid chain: Lantibiotic Flvbeta.g (72 aa).

A propeptide spans 1–34 (MNNNNFDMEKFKKLAAIVSEGEIDEMLDETTVGA) (cleaved by FlvT). A cross-link (lanthionine (Ser-Cys); by FlvM2) is located at residues 36–40 (STLPC). Thr37, Thr46, and Thr48 each carry 2,3-didehydrobutyrine; by FlvM2. Cross-links (beta-methyllanthionine (Thr-Cys); by FlvM2) lie at residues 55–61 (TTGFDWC), 63–66 (TGAC), and 67–70 (THSC).

Post-translationally, contains LL-lanthionine and DL-beta-methyllanthionine, when coepressed in E.coli with the flavecin synthetase FlvM2.

Its subcellular location is the secreted. In terms of biological role, lanthionine-containing peptide antibiotic (lantibiotic) that is probably weakly active on Gram-positive bacteria, since its analog [Del1]Flvbeta.g shows weak antibacterial activity against M.luteus. This activity is synergistically enhanced by [Del2]Flvalpha.a, an analog of Flvalpha.a, which is encoded by the same operon than Flvbeta.g. The bactericidal activity of lantibiotics is based on depolarization of energized bacterial cytoplasmic membranes, initiated by the formation of aqueous transmembrane pores. This is Lantibiotic Flvbeta.g from Ruminococcus flavefaciens.